Here is a 458-residue protein sequence, read N- to C-terminus: Retinoic acid receptor alpha (458 aa).

The segment at Met1 to Pro87 is modulating. Residues Gly39–Pro78 are disordered. Over residues Gly52–Glu69 the composition is skewed to polar residues. NR C4-type zinc fingers lie at residues Cys88–Cys108 and Cys124–Cys148. The nuclear receptor DNA-binding region spans Cys88–Met153. A hinge region spans residues Ser154–Pro182. Positions Glu183–Glu417 constitute an NR LBD domain. The 9aaTAD motif lies at Pro407 to Asn415. The tract at residues Leu419–Pro458 is disordered. Residues Ser439–Pro458 show a composition bias toward low complexity.

This sequence belongs to the nuclear hormone receptor family. NR1 subfamily. As to quaternary structure, heterodimer; with an rxr molecule. Binds DNA preferentially as a rar/rxr heterodimer.

It is found in the nucleus. Its function is as follows. Receptor for retinoic acid. Retinoic acid receptors bind as heterodimers to their target response elements in response to their ligands, all-trans or 9-cis retinoic acid, and regulate gene expression in various biological processes. The rar/rxr heterodimers bind to the retinoic acid response elements (RARE) composed of tandem 5'-AGGTCA-3' sites known as DR1-DR5. Required for primary neurogenesis and for anteroposterior neural patterning. The polypeptide is Retinoic acid receptor alpha (rara) (Xenopus laevis (African clawed frog)).